Here is a 346-residue protein sequence, read N- to C-terminus: Protein RecA (346 aa).

An ATP-binding site is contributed by 67–74 (GPESSGKT).

It belongs to the RecA family.

The protein resides in the cytoplasm. In terms of biological role, can catalyze the hydrolysis of ATP in the presence of single-stranded DNA, the ATP-dependent uptake of single-stranded DNA by duplex DNA, and the ATP-dependent hybridization of homologous single-stranded DNAs. It interacts with LexA causing its activation and leading to its autocatalytic cleavage. In Frankia alni (strain DSM 45986 / CECT 9034 / ACN14a), this protein is Protein RecA.